The primary structure comprises 271 residues: Formamidopyrimidine-DNA glycosylase (271 aa).

The active-site Schiff-base intermediate with DNA is the Pro-2. Residue Glu-3 is the Proton donor of the active site. The active-site Proton donor; for beta-elimination activity is Lys-57. Residues His-90, Arg-109, and Lys-151 each coordinate DNA. The segment at 236–270 (HVYGRGSKSCTHCGNLLSEIRLGQRTTVFCGLCQT) adopts an FPG-type zinc-finger fold. The active-site Proton donor; for delta-elimination activity is the Arg-260.

This sequence belongs to the FPG family. Monomer. It depends on Zn(2+) as a cofactor.

It catalyses the reaction Hydrolysis of DNA containing ring-opened 7-methylguanine residues, releasing 2,6-diamino-4-hydroxy-5-(N-methyl)formamidopyrimidine.. The enzyme catalyses 2'-deoxyribonucleotide-(2'-deoxyribose 5'-phosphate)-2'-deoxyribonucleotide-DNA = a 3'-end 2'-deoxyribonucleotide-(2,3-dehydro-2,3-deoxyribose 5'-phosphate)-DNA + a 5'-end 5'-phospho-2'-deoxyribonucleoside-DNA + H(+). Its function is as follows. Involved in base excision repair of DNA damaged by oxidation or by mutagenic agents. Acts as a DNA glycosylase that recognizes and removes damaged bases. Has a preference for oxidized purines, such as 7,8-dihydro-8-oxoguanine (8-oxoG). Has AP (apurinic/apyrimidinic) lyase activity and introduces nicks in the DNA strand. Cleaves the DNA backbone by beta-delta elimination to generate a single-strand break at the site of the removed base with both 3'- and 5'-phosphates. The protein is Formamidopyrimidine-DNA glycosylase of Shewanella denitrificans (strain OS217 / ATCC BAA-1090 / DSM 15013).